The primary structure comprises 328 residues: Formimidoylglutamase (328 aa).

Mn(2+) contacts are provided by histidine 133, aspartate 159, histidine 161, aspartate 163, aspartate 253, and aspartate 255.

It belongs to the arginase family. Requires Mn(2+) as cofactor.

The enzyme catalyses N-formimidoyl-L-glutamate + H2O = formamide + L-glutamate. It participates in amino-acid degradation; L-histidine degradation into L-glutamate; L-glutamate from N-formimidoyl-L-glutamate (hydrolase route): step 1/1. Functionally, catalyzes the conversion of N-formimidoyl-L-glutamate to L-glutamate and formamide. The sequence is that of Formimidoylglutamase from Streptococcus pyogenes serotype M28 (strain MGAS6180).